A 129-amino-acid chain; its full sequence is Gem-associated protein 7 (129 aa).

M1 carries the N-acetylmethionine modification. The region spanning 1–31 (MQSPLTIPVPVPVLRLPRGPDGFSRGFASDG) is the SUZ-C domain. One can recognise a Sm domain in the interval 63–129 (RYLRSLLAMV…SDIISYSFKL (67 aa)).

The protein belongs to the gemin-7 family. In terms of assembly, part of the core SMN complex that contains SMN1, GEMIN2/SIP1, DDX20/GEMIN3, GEMIN4, GEMIN5, GEMIN6, GEMIN7, GEMIN8 and STRAP/UNRIP. Part of the SMN-Sm complex that contains SMN1, GEMIN2/SIP1, DDX20/GEMIN3, GEMIN4, GEMIN5, GEMIN6, GEMIN7, GEMIN8, STRAP/UNRIP and the Sm proteins SNRPB, SNRPD1, SNRPD2, SNRPD3, SNRPE, SNRPF and SNRPG. Interacts with GEMIN6; the interaction is direct. Interacts with STRAP/UNRIP; the interaction is direct. Interacts with GEMIN8; the interaction is direct. Interacts with SNRPB, SNRPD2, SNRPD3 and SNRPE; the interaction is direct.

The protein localises to the nucleus. It is found in the nucleoplasm. Its subcellular location is the gem. It localises to the cytoplasm. Functionally, the SMN complex catalyzes the assembly of small nuclear ribonucleoproteins (snRNPs), the building blocks of the spliceosome, and thereby plays an important role in the splicing of cellular pre-mRNAs. Most spliceosomal snRNPs contain a common set of Sm proteins SNRPB, SNRPD1, SNRPD2, SNRPD3, SNRPE, SNRPF and SNRPG that assemble in a heptameric protein ring on the Sm site of the small nuclear RNA to form the core snRNP (Sm core). In the cytosol, the Sm proteins SNRPD1, SNRPD2, SNRPE, SNRPF and SNRPG are trapped in an inactive 6S pICln-Sm complex by the chaperone CLNS1A that controls the assembly of the core snRNP. To assemble core snRNPs, the SMN complex accepts the trapped 5Sm proteins from CLNS1A forming an intermediate. Binding of snRNA inside 5Sm triggers eviction of the SMN complex, thereby allowing binding of SNRPD3 and SNRPB to complete assembly of the core snRNP. The sequence is that of Gem-associated protein 7 (Gemin7) from Mus musculus (Mouse).